The following is a 673-amino-acid chain: Polygalacturonate 4-alpha-galacturonosyltransferase (673 aa).

Topologically, residues 1 to 22 (MALKRGLSGVNRIRGSGGGSRS) are cytoplasmic. Residues 23 to 43 (VLVLLIFFCVFAPLCFFVGRG) form a helical; Signal-anchor for type II membrane protein membrane-spanning segment. Residues 44–673 (VYIDSSNDYS…PYLRRCNLHE (630 aa)) are Lumenal-facing. A glycan (N-linked (GlcNAc...) asparagine) is linked at N103. Residues 112 to 136 (GVDPSFRHSENPATPDVKSNNLNEK) are disordered. 4 N-linked (GlcNAc...) asparagine glycosylation sites follow: N382, N434, N538, and N585.

Belongs to the glycosyltransferase 8 family. Expressed in seedlings, inflorescences, flowers, siliques, pollen, roots, stems and leaves.

The protein localises to the golgi apparatus membrane. The enzyme catalyses [(1-&gt;4)-alpha-D-galacturonosyl](n) + UDP-alpha-D-galacturonate = [(1-&gt;4)-alpha-D-galacturonosyl](n+1) + UDP + H(+). Its pathway is glycan metabolism; pectin biosynthesis. Its function is as follows. Involved in pectin biosynthesis. Catalyzes the transfer of galacturonic acid from uridine 5'-diphosphogalacturonic acid onto the pectic polysaccharide homogalacturonan. The protein is Polygalacturonate 4-alpha-galacturonosyltransferase (GAUT1) of Arabidopsis thaliana (Mouse-ear cress).